The following is a 301-amino-acid chain: GTPase Era (301 aa).

The region spanning 6–173 (KSGFVAIVGR…LEQTNANLEI (168 aa)) is the Era-type G domain. The G1 stretch occupies residues 14-21 (GRPNVGKS). 14–21 (GRPNVGKS) lines the GTP pocket. Residues 40–44 (QTTRN) are G2. The tract at residues 61–64 (DTPG) is G3. GTP-binding positions include 61-65 (DTPGI) and 123-126 (NKID). The interval 123–126 (NKID) is G4. The G5 stretch occupies residues 152–154 (ISA). In terms of domain architecture, KH type-2 spans 204–282 (TREEVPHSVA…FLEIWVKVQK (79 aa)).

This sequence belongs to the TRAFAC class TrmE-Era-EngA-EngB-Septin-like GTPase superfamily. Era GTPase family. As to quaternary structure, monomer.

The protein resides in the cytoplasm. It is found in the cell membrane. Its function is as follows. An essential GTPase that binds both GDP and GTP, with rapid nucleotide exchange. Plays a role in 16S rRNA processing and 30S ribosomal subunit biogenesis and possibly also in cell cycle regulation and energy metabolism. This is GTPase Era from Listeria monocytogenes serotype 4b (strain F2365).